A 290-amino-acid chain; its full sequence is MDYKHFKGKHANIVIEIISLLEKGVKKAQEILEKPDAGSYTKLENSSGDTPIKADLALDKFLEENFLSLENIKSVFSEEKETPVTKENGSYLIAYDPLDGSSVMEANFLVGTIIGIYEKDYKAQNLVASLYVVFGHKIELMVALEEVYRYAFYQNKFHFIETIVLENKGKIVASGGNQKDFSLGLKKALEGFFAENYRLRYSGSMVADVHHVLIKKGGMFSYPQKKLRKLFEVFPLALIIEKAKGEAFYFDKGVKKRLLEQSVESYHEKSECYLASPHEAQILEKHLKGE.

Mg(2+)-binding residues include Glu-78, Asp-96, Leu-98, and Asp-99. Substrate is bound by residues Asp-99–Ser-102, Tyr-201, and Lys-226. Glu-232 is a binding site for Mg(2+).

It belongs to the FBPase class 1 family. Homotetramer. Mg(2+) is required as a cofactor.

It is found in the cytoplasm. It catalyses the reaction beta-D-fructose 1,6-bisphosphate + H2O = beta-D-fructose 6-phosphate + phosphate. It functions in the pathway carbohydrate biosynthesis; gluconeogenesis. The protein is Fructose-1,6-bisphosphatase class 1 of Helicobacter pylori (strain HPAG1).